Consider the following 607-residue polypeptide: Chaperone protein HtpG (607 aa).

Residues 1-323 (MKKEEKIFKA…CDSLSLNISR (323 aa)) are a; substrate-binding. The tract at residues 324-534 (EILQQNAELQ…KGGLSLEMEK (211 aa)) is b. The c stretch occupies residues 535–607 (TLSEMTNNND…FIKNLNSLIK (73 aa)).

Belongs to the heat shock protein 90 family. In terms of assembly, homodimer.

The protein resides in the cytoplasm. Functionally, molecular chaperone. Has ATPase activity. The sequence is that of Chaperone protein HtpG from Fusobacterium nucleatum subsp. nucleatum (strain ATCC 25586 / DSM 15643 / BCRC 10681 / CIP 101130 / JCM 8532 / KCTC 2640 / LMG 13131 / VPI 4355).